Reading from the N-terminus, the 541-residue chain is EH domain-containing protein 4 (541 aa).

At M1 the chain carries N-acetylmethionine. A Dynamin-type G domain is found at 58–289 (FENKPMILLV…DLFRDIQSLP (232 aa)). The interval 68-75 (GQYSTGKT) is G1 motif. 68 to 75 (GQYSTGKT) contributes to the ATP binding site. A G2 motif region spans residues 94-95 (EP). Residues 156–159 (DSPG) are G3 motif. S162 carries the post-translational modification Phosphoserine. A G4 motif region spans residues 222–225 (NKAD). K223 provides a ligand contact to ATP. Position 246 (V246) is a region of interest, G5 motif. An ATP-binding site is contributed by W261. In terms of domain architecture, EH spans 447–535 (DKPVYDELFY…PHLVPPSHRK (89 aa)). Y451 carries the phosphotyrosine modification. S459 carries the phosphoserine modification. Residues 479–514 (LPNSVLGKIWKLADCDCDGMLDEEEFALAKHLIKIK) enclose the EF-hand domain. Ca(2+) contacts are provided by D492, D494, D496, M498, and E503.

It belongs to the TRAFAC class dynamin-like GTPase superfamily. Dynamin/Fzo/YdjA family. EHD subfamily. In terms of assembly, homooligomer, and heterooligomer with EHD1, EHD2 and EHD3. Forms a complex with EHD4 and MICALL1; the complex controls CDH5 trafficking and coordinates angiogenesis. Highly expressed in pancreas and heart.

It is found in the early endosome membrane. It localises to the recycling endosome membrane. The protein localises to the cell membrane. Its subcellular location is the cell junction. The protein resides in the adherens junction. ATP- and membrane-binding protein that probably controls membrane reorganization/tubulation upon ATP hydrolysis. Plays a role in early endosomal transport. During sprouting angiogenesis, in complex with PACSIN2 and MICALL1, forms recycling endosome-like tubular structure at asymmetric adherens junctions to control CDH5 trafficking. This is EH domain-containing protein 4 from Homo sapiens (Human).